A 269-amino-acid polypeptide reads, in one-letter code: NAD-capped RNA hydrolase NudC (269 aa).

Residue R74 coordinates substrate. Zn(2+)-binding residues include C103, C106, C121, and C124. Y129 lines the substrate pocket. The region spanning 130–253 is the Nudix hydrolase domain; sequence PRIFPCIIVA…TIARQLIENT (124 aa). 3 residues coordinate a divalent metal cation: A163, E179, and E183. Positions 164–185 match the Nudix box motif; sequence GFLEVGETLEQCVAREVKEETG. Residue 197-204 participates in substrate binding; that stretch reads QPWAFPSS. E224 provides a ligand contact to a divalent metal cation. A246 is a binding site for substrate.

The protein belongs to the Nudix hydrolase family. NudC subfamily. In terms of assembly, homodimer. Requires Mg(2+) as cofactor. Mn(2+) is required as a cofactor. The cofactor is Zn(2+).

The enzyme catalyses a 5'-end NAD(+)-phospho-ribonucleoside in mRNA + H2O = a 5'-end phospho-adenosine-phospho-ribonucleoside in mRNA + beta-nicotinamide D-ribonucleotide + 2 H(+). It carries out the reaction NAD(+) + H2O = beta-nicotinamide D-ribonucleotide + AMP + 2 H(+). The catalysed reaction is NADH + H2O = reduced beta-nicotinamide D-ribonucleotide + AMP + 2 H(+). Functionally, mRNA decapping enzyme that specifically removes the nicotinamide adenine dinucleotide (NAD) cap from a subset of mRNAs by hydrolyzing the diphosphate linkage to produce nicotinamide mononucleotide (NMN) and 5' monophosphate mRNA. The NAD-cap is present at the 5'-end of some mRNAs and stabilizes RNA against 5'-processing. Has preference for mRNAs with a 5'-end purine. Catalyzes the hydrolysis of a broad range of dinucleotide pyrophosphates. This chain is NAD-capped RNA hydrolase NudC, found in Vibrio atlanticus (strain LGP32) (Vibrio splendidus (strain Mel32)).